The sequence spans 225 residues: Urease subunit alpha (225 aa).

Residues 1–102 form a urease gamma region; the sequence is MRLTPKELDK…LVTIHNPIED (102 aa). Residues 103 to 225 are urease beta; sequence NGKLTPGEYI…ANAAQKHFIH (123 aa).

It in the N-terminal section; belongs to the urease gamma subunit family. This sequence in the C-terminal section; belongs to the urease beta subunit family. Heterohexamer of 3 UreA (alpha) and 3 UreB (beta) subunits.

It localises to the cytoplasm. It carries out the reaction urea + 2 H2O + H(+) = hydrogencarbonate + 2 NH4(+). The protein operates within nitrogen metabolism; urea degradation; CO(2) and NH(3) from urea (urease route): step 1/1. This is Urease subunit alpha from Helicobacter hepaticus (strain ATCC 51449 / 3B1).